A 278-amino-acid chain; its full sequence is DNA-directed RNA polymerase subunit alpha (278 aa).

Belongs to the RNA polymerase alpha chain family. In terms of assembly, in plastids the minimal PEP RNA polymerase catalytic core is composed of four subunits: alpha, beta, beta', and beta''. When a (nuclear-encoded) sigma factor is associated with the core the holoenzyme is formed, which can initiate transcription.

The protein resides in the plastid. The protein localises to the chloroplast. The catalysed reaction is RNA(n) + a ribonucleoside 5'-triphosphate = RNA(n+1) + diphosphate. Its function is as follows. DNA-dependent RNA polymerase catalyzes the transcription of DNA into RNA using the four ribonucleoside triphosphates as substrates. The sequence is that of DNA-directed RNA polymerase subunit alpha (rpoA) from Chlorella vulgaris (Green alga).